Here is a 92-residue protein sequence, read N- to C-terminus: Parbolysin P7 (92 aa).

3 cysteine pairs are disulfide-bonded: C15/C36, C21/C32, and C46/C59.

Belongs to the worm cytolysin family. As to expression, localized within the skin and proboscis and are most readily isolated from body mucus secretions.

The protein resides in the secreted. Cytolysin that shows hemolytic activity (on bovine erythrocytes, HC(50)=5.75 mg/ml). This hemolytic activity is completely inhibited by small unilamelar vesicles composed of PC/PG, PC/PI and PC/PS in 1:1 molar ratios (with at least 100 mg/ml concentration). The protein is Parbolysin P7 of Parborlasia corrugatus (Antarctic nemertean worm).